A 298-amino-acid polypeptide reads, in one-letter code: MDAHLENGAGIDVVLVTGLSGAGRGTAAKVLEDLGWYVADNLPPQLITRMVDLGMDAGSRITQLAVVMDVRSRGFTGDLDSVRTELATRNIAPRVVFMEASDDMLVRRYEQNRRSHPLQGDQTLAEGIAAERRMLAPVRATADLIIDTSTLSVRALRETIERAFGGGASATISVTVESFGFKYGLPMDADMVMDVRFLPNPHWVDELRPRTGQDPAVRDYVLGQPGAAEFLDAYHRLLSLVVDGYRREGKRYMTIAIGCTGGKHRSVAIAEALMQRLQAQHGEAQLSVRVLHRDLGRE.

An ATP-binding site is contributed by 18-25 (GLSGAGRG). 69 to 72 (DVRS) lines the GTP pocket.

Belongs to the RapZ-like family.

Displays ATPase and GTPase activities. The chain is Nucleotide-binding protein MAV_3359 from Mycobacterium avium (strain 104).